The chain runs to 728 residues: Ankyrin repeat protein A (728 aa).

5 ANK repeats span residues 381-410 (INLPGLYLAINYGNADIVETIFNSLSETGY), 429-458 (NGFSGLFLAISRKDKNVVTSILNALPKLAA), 477-506 (TSSHVLYHVMANGDADMLKIVLNALPLLIR), 525-554 (YGCPGLYLAMQNGHSDIVKVILEALPSLAQ), and 573-602 (ARDTGLFMAMQRGHMNVINTIFNALPTLFN).

This sequence belongs to the Toxin_15 family.

This is Ankyrin repeat protein A (arpA) from Escherichia coli (strain K12).